Reading from the N-terminus, the 77-residue chain is Small ribosomal subunit protein uS17 (77 aa).

Belongs to the universal ribosomal protein uS17 family. As to quaternary structure, part of the 30S ribosomal subunit.

In terms of biological role, one of the primary rRNA binding proteins, it binds specifically to the 5'-end of 16S ribosomal RNA. The protein is Small ribosomal subunit protein uS17 of Rickettsia prowazekii (strain Madrid E).